The sequence spans 453 residues: Major fimbrium subunit FimC (453 aa).

Positions 1-28 are cleaved as a signal peptide; sequence MKMKYFHHPSGLLPRLLLLLLLTMGAVA. C29 is lipidated: N-palmitoyl cysteine. C29 carries S-diacylglycerol cysteine lipidation. A propeptide spanning residues 29 to 56 is cleaved from the precursor; that stretch reads CTKEDNPDQPTSDEVATVKMSLDDVEMR.

This sequence belongs to the bacteroidetes fimbrillin superfamily. FimA/Mfa1 family. In terms of assembly, fimbriae are composed of a major, structural subunit and the minor components FimC, FimD and FimE. Identified in a complex composed of FimC, FimD and FimE (in vitro). The complex interacts with host extracellular matrix proteins, including fibronectin and type I collagen. Interacts with host CXCR4.

It is found in the fimbrium. The protein localises to the cell outer membrane. In terms of biological role, minor component of fimbriae. These long, filamentous pili are attached to the cell surface; they mediate biofilm formation, adhesion onto host cells and onto other bacteria that are part of the oral microbiome. They play an important role in invasion of periodontal tissues and are major virulence factors. FimC, FimD and FimE contribute to interaction with host CXCR4 and thereby down-regulate the TLR2-mediated host immune response. The chain is Major fimbrium subunit FimC from Porphyromonas gingivalis (strain ATCC 33277 / DSM 20709 / CIP 103683 / JCM 12257 / NCTC 11834 / 2561).